A 249-amino-acid polypeptide reads, in one-letter code: tRNA pseudouridine synthase A (249 aa).

The Nucleophile role is filled by Asp-53. A substrate-binding site is contributed by Tyr-111.

The protein belongs to the tRNA pseudouridine synthase TruA family. As to quaternary structure, homodimer.

It catalyses the reaction uridine(38/39/40) in tRNA = pseudouridine(38/39/40) in tRNA. Its function is as follows. Formation of pseudouridine at positions 38, 39 and 40 in the anticodon stem and loop of transfer RNAs. The chain is tRNA pseudouridine synthase A from Streptococcus suis (strain 98HAH33).